A 595-amino-acid polypeptide reads, in one-letter code: Aspartate--tRNA ligase (595 aa).

Glutamate 171 serves as a coordination point for L-aspartate. An aspartate region spans residues 195 to 198; it reads QLFK. Residue arginine 217 participates in L-aspartate binding. Residues 217-219 and glutamine 226 each bind ATP; that span reads RDE. Histidine 448 contacts L-aspartate. ATP is bound at residue glutamate 482. Arginine 489 is an L-aspartate binding site. Residue 534-537 coordinates ATP; sequence GLDR.

This sequence belongs to the class-II aminoacyl-tRNA synthetase family. Type 1 subfamily. In terms of assembly, homodimer.

Its subcellular location is the cytoplasm. It carries out the reaction tRNA(Asp) + L-aspartate + ATP = L-aspartyl-tRNA(Asp) + AMP + diphosphate. Functionally, catalyzes the attachment of L-aspartate to tRNA(Asp) in a two-step reaction: L-aspartate is first activated by ATP to form Asp-AMP and then transferred to the acceptor end of tRNA(Asp). This Erwinia tasmaniensis (strain DSM 17950 / CFBP 7177 / CIP 109463 / NCPPB 4357 / Et1/99) protein is Aspartate--tRNA ligase.